The primary structure comprises 523 residues: Maintenance of mitochondrial morphology protein 1 (523 aa).

At Met1–Gly43 the chain is on the lumenal side. Residues Leu44–Phe64 traverse the membrane as a helical segment. Over Gly65 to Thr523 the chain is Cytoplasmic. Disordered regions lie at residues Pro70–Thr118, Thr295–Gly349, Arg420–Gly473, and Gly492–Thr523. 3 stretches are compositionally biased toward polar residues: residues Gly74–Ser96, Ser105–Thr118, and Thr295–Glu312. The SMP-LTD domain occupies Gln151–Pro412. Positions Gly449 to Met467 are enriched in gly residues.

It belongs to the MMM1 family. As to quaternary structure, homodimer. Component of the ER-mitochondria encounter structure (ERMES) or MDM complex, composed of MMM1, MDM10, MDM12 and MDM34. An MMM1 homodimer associates with one molecule of MDM12 on each side in a pairwise head-to-tail manner, and the SMP-LTD domains of MMM1 and MDM12 generate a continuous hydrophobic tunnel for phospholipid trafficking.

The protein localises to the endoplasmic reticulum membrane. Component of the ERMES/MDM complex, which serves as a molecular tether to connect the endoplasmic reticulum (ER) and mitochondria. Components of this complex are involved in the control of mitochondrial shape and protein biogenesis, and function in nonvesicular lipid trafficking between the ER and mitochondria. The MDM12-MMM1 subcomplex functions in the major beta-barrel assembly pathway that is responsible for biogenesis of all outer membrane beta-barrel proteins, and acts in a late step after the SAM complex. The MDM10-MDM12-MMM1 subcomplex further acts in the TOM40-specific pathway after the action of the MDM12-MMM1 complex. Essential for establishing and maintaining the structure of mitochondria and maintenance of mtDNA nucleoids. The polypeptide is Maintenance of mitochondrial morphology protein 1 (Paracoccidioides brasiliensis (strain Pb03)).